The following is a 419-amino-acid chain: L-rhamnose isomerase (419 aa).

Residues histidine 262, aspartate 294, and aspartate 296 each coordinate Mn(2+).

The protein belongs to the rhamnose isomerase family. In terms of assembly, homotetramer. Mn(2+) serves as cofactor.

The protein localises to the cytoplasm. The enzyme catalyses L-rhamnopyranose = L-rhamnulose. It participates in carbohydrate degradation; L-rhamnose degradation; glycerone phosphate from L-rhamnose: step 1/3. In terms of biological role, catalyzes the interconversion of L-rhamnose and L-rhamnulose. The sequence is that of L-rhamnose isomerase from Escherichia coli O17:K52:H18 (strain UMN026 / ExPEC).